A 261-amino-acid chain; its full sequence is 4-hydroxy-tetrahydrodipicolinate reductase (261 aa).

9–14 serves as a coordination point for NAD(+); it reads GCLGRM. NADP(+) is bound at residue arginine 36. NAD(+) is bound by residues 97 to 99 and 118 to 121; these read GTT and SANM. The active-site Proton donor/acceptor is the histidine 151. Histidine 152 serves as a coordination point for (S)-2,3,4,5-tetrahydrodipicolinate. Catalysis depends on lysine 155, which acts as the Proton donor. 161-162 provides a ligand contact to (S)-2,3,4,5-tetrahydrodipicolinate; that stretch reads GT.

This sequence belongs to the DapB family.

Its subcellular location is the cytoplasm. The enzyme catalyses (S)-2,3,4,5-tetrahydrodipicolinate + NAD(+) + H2O = (2S,4S)-4-hydroxy-2,3,4,5-tetrahydrodipicolinate + NADH + H(+). It carries out the reaction (S)-2,3,4,5-tetrahydrodipicolinate + NADP(+) + H2O = (2S,4S)-4-hydroxy-2,3,4,5-tetrahydrodipicolinate + NADPH + H(+). It participates in amino-acid biosynthesis; L-lysine biosynthesis via DAP pathway; (S)-tetrahydrodipicolinate from L-aspartate: step 4/4. Catalyzes the conversion of 4-hydroxy-tetrahydrodipicolinate (HTPA) to tetrahydrodipicolinate. In Wolbachia pipientis wMel, this protein is 4-hydroxy-tetrahydrodipicolinate reductase.